Here is a 752-residue protein sequence, read N- to C-terminus: GTPase-activating protein rrc-1 (752 aa).

In terms of domain architecture, SH3 spans 165-244; it reads PAIAAAVVTK…PRDCVMLIDD (80 aa). The region spanning 281–463 is the Rho-GAP domain; that stretch reads LELTELFMRT…FCIENSDSLF (183 aa). Disordered regions lie at residues 523-552 and 582-609; these read STGELCGSPPSEVKWRSRSTRSHSTDATFQ and RSMRPTSRPPPSPRTRRARFSNGGGANN.

Functions as a GTPase-activating protein (GAP) for ced-10/RAC-1 and CDC42. The protein is GTPase-activating protein rrc-1 of Caenorhabditis briggsae.